Consider the following 240-residue polypeptide: Phosphoribosylaminoimidazole-succinocarboxamide synthase (240 aa).

This sequence belongs to the SAICAR synthetase family.

It catalyses the reaction 5-amino-1-(5-phospho-D-ribosyl)imidazole-4-carboxylate + L-aspartate + ATP = (2S)-2-[5-amino-1-(5-phospho-beta-D-ribosyl)imidazole-4-carboxamido]succinate + ADP + phosphate + 2 H(+). The protein operates within purine metabolism; IMP biosynthesis via de novo pathway; 5-amino-1-(5-phospho-D-ribosyl)imidazole-4-carboxamide from 5-amino-1-(5-phospho-D-ribosyl)imidazole-4-carboxylate: step 1/2. The chain is Phosphoribosylaminoimidazole-succinocarboxamide synthase from Wolbachia pipientis subsp. Culex pipiens (strain wPip).